The sequence spans 749 residues: Chaperone protein DnaK 1 (749 aa).

Residue Thr198 is modified to Phosphothreonine; by autocatalysis. Basic and acidic residues-rich tracts occupy residues 643-653 (RWDADPWDRSR), 661-694 (YDDRRSPVSDPYRGERWVEEQTSMSRREPVRDRN), and 711-724 (PTWEEDQPPRRDRS). The tract at residues 643 to 749 (RWDADPWDRS…GWDDDDDEWF (107 aa)) is disordered. Over residues 740 to 749 (GWDDDDDEWF) the composition is skewed to acidic residues.

It belongs to the heat shock protein 70 family.

Its function is as follows. Acts as a chaperone. This Synechococcus sp. (strain ATCC 27144 / PCC 6301 / SAUG 1402/1) (Anacystis nidulans) protein is Chaperone protein DnaK 1.